A 446-amino-acid polypeptide reads, in one-letter code: Probable carboxylesterase 16 (446 aa).

Positions 84-131 (PEPDSLRHKDNYNHQPRSDRRHSYGPNHNSPAPAERNESRRNSYGCNN) are disordered. Basic and acidic residues predominate over residues 87 to 105 (DSLRHKDNYNHQPRSDRRH). An Involved in the stabilization of the negatively charged intermediate by the formation of the oxyanion hole motif is present at residues 158–160 (HGG). Catalysis depends on residues Ser-274, Asp-378, and His-408.

The protein belongs to the 'GDXG' lipolytic enzyme family. In terms of tissue distribution, expressed in roots, leaves, stems, flowers and siliques.

The catalysed reaction is a carboxylic ester + H2O = an alcohol + a carboxylate + H(+). In terms of biological role, carboxylesterase acting on esters with varying acyl chain length. In Arabidopsis thaliana (Mouse-ear cress), this protein is Probable carboxylesterase 16 (CXE16).